We begin with the raw amino-acid sequence, 748 residues long: ATP-dependent rRNA helicase SPB4 (748 aa).

A Q motif motif is present at residues 15 to 43; sequence WAKLNPPLSPWILDVINSMGFKNMTPVQA. In terms of domain architecture, Helicase ATP-binding spans 46–260; that stretch reads IPRAVKNQDC…GLGLRNPVRI (215 aa). 59–66 is a binding site for ATP; that stretch reads AVTGSGKT. Residues 119–156 are disordered; the sequence is ESEEETGDVEAHAPPFASSSRSPSPQTPDKPLFPLPML. Residues 132–142 show a composition bias toward low complexity; the sequence is PPFASSSRSPS. Residues 143–152 are compositionally biased toward pro residues; sequence PQTPDKPLFP. The DEAD box motif lies at 207-210; that stretch reads DEAD. One can recognise a Helicase C-terminal domain in the interval 295–460; it reads KTLQLIRLLL…KAQRSILDFL (166 aa). The disordered stretch occupies residues 614 to 748; it reads AQRADNQSSN…IGGGMFDDLE (135 aa). Basic and acidic residues-rich tracts occupy residues 626 to 669 and 708 to 730; these read ARAE…KYEW and EIGKEYKSLKREIKEEKSVKESS. Positions 732-748 are enriched in gly residues; that stretch reads GGAGGGGIGGGMFDDLE.

The protein belongs to the DEAD box helicase family. DDX55/SPB4 subfamily. Component of pre-60S ribosomal complexes.

Its subcellular location is the nucleus. The protein resides in the nucleolus. It carries out the reaction ATP + H2O = ADP + phosphate + H(+). In terms of biological role, ATP-binding RNA helicase involved in the biogenesis of 60S ribosomal subunits. Binds 90S pre-ribosomal particles and dissociates from pre-60S ribosomal particles after processing of 27SB pre-rRNA. Required for the normal formation of 18S rRNA through the processing of pre-rRNAs at sites A0, A1 and A2, and the normal formation of 25S and 5.8S rRNAs through the processing of pre-rRNAs at sites C1 and C2. This chain is ATP-dependent rRNA helicase SPB4, found in Cryptococcus neoformans var. neoformans serotype D (strain B-3501A) (Filobasidiella neoformans).